The sequence spans 790 residues: Phenylalanine--tRNA ligase beta subunit (790 aa).

Residues 39–154 form the tRNA-binding domain; it reads PDSLNTVVTG…ADTPLGESAC (116 aa). A B5 domain is found at 404 to 483; sequence FSPLSLSVRP…FVQKTQKILP (80 aa). 4 residues coordinate Mg(2+): D457, D463, E466, and E467. An FDX-ACB domain is found at 694 to 790; that stretch reads PIYPASSRDI…KLANIGQGNS (97 aa).

This sequence belongs to the phenylalanyl-tRNA synthetase beta subunit family. Type 1 subfamily. In terms of assembly, tetramer of two alpha and two beta subunits. The cofactor is Mg(2+).

It is found in the cytoplasm. It catalyses the reaction tRNA(Phe) + L-phenylalanine + ATP = L-phenylalanyl-tRNA(Phe) + AMP + diphosphate + H(+). The polypeptide is Phenylalanine--tRNA ligase beta subunit (Chlamydia trachomatis serovar A (strain ATCC VR-571B / DSM 19440 / HAR-13)).